We begin with the raw amino-acid sequence, 773 residues long: Mitogen-activated protein kinase kinase kinase 9 (773 aa).

Basic and acidic residues predominate over residues 1-14; the sequence is MKKSSDKSPVRQHD. The tract at residues 1-35 is disordered; sequence MKKSSDKSPVRQHDTATQINSDAVSSSTSFTDSDS. Positions 21 to 35 are enriched in low complexity; that stretch reads SDAVSSSTSFTDSDS. Ser79 and Ser150 each carry phosphoserine. The tract at residues 100 to 493 is regulatory region; that stretch reads FDKILALMKK…VSNTSPICVS (394 aa). Phosphoserine; by MAPK4 is present on Ser365. The disordered stretch occupies residues 426–455; it reads EIVRRPSSSSSSENGCDEEEAEDDKVEKEE. Residues 440-449 are compositionally biased toward acidic residues; sequence GCDEEEAEDD. The Protein kinase domain maps to 501–755; sequence WQKGQLLRQG…ATELLNHPFV (255 aa). ATP contacts are provided by residues 507 to 515 and Lys529; that span reads LRQGSFGSV. Catalysis depends on Asp624, which acts as the Proton acceptor. Ser768 bears the Phosphoserine mark.

Belongs to the protein kinase superfamily. STE Ser/Thr protein kinase family. MAP kinase kinase kinase subfamily. In terms of assembly, interacts with MPK4. Phosphorylated by MPK4 upon treatment with flg22. In terms of tissue distribution, expressed at least in rosette leaves (at protein level).

It catalyses the reaction L-seryl-[protein] + ATP = O-phospho-L-seryl-[protein] + ADP + H(+). The catalysed reaction is L-threonyl-[protein] + ATP = O-phospho-L-threonyl-[protein] + ADP + H(+). Functionally, triggers SUMM2-mediated immune responses, including cell death and defense responses. Probably inhibited by the MEKK1-MKK1/ MKK2-MPK4 kinase cascade to adjust plant defense. Seems to contribute in transducing external glutamate (L-Glu) signal that elicits large-scale changes in root architecture. This Arabidopsis thaliana (Mouse-ear cress) protein is Mitogen-activated protein kinase kinase kinase 9.